The sequence spans 1343 residues: DNA-directed RNA polymerase subunit beta (1343 aa).

This sequence belongs to the RNA polymerase beta chain family. In terms of assembly, the RNAP catalytic core consists of 2 alpha, 1 beta, 1 beta' and 1 omega subunit. When a sigma factor is associated with the core the holoenzyme is formed, which can initiate transcription.

The enzyme catalyses RNA(n) + a ribonucleoside 5'-triphosphate = RNA(n+1) + diphosphate. In terms of biological role, DNA-dependent RNA polymerase catalyzes the transcription of DNA into RNA using the four ribonucleoside triphosphates as substrates. The protein is DNA-directed RNA polymerase subunit beta of Shewanella woodyi (strain ATCC 51908 / MS32).